A 1107-amino-acid polypeptide reads, in one-letter code: Miniconductance mechanosensitive channel MscM (1107 aa).

An N-terminal signal peptide occupies residues 1–19 (MRLIITFLMAWCLSWGAYA). The next 11 membrane-spanning stretches (helical) occupy residues 467–487 (VMML…ILVG), 522–542 (LFWS…LGYG), 551–571 (LAVA…VVMI), 600–620 (YLMS…FDNL), 628–648 (SLGR…TLSL), 674–694 (MMIG…LATA), 698–718 (LARL…YHVI), 785–805 (ILML…HSAF), 828–848 (PITL…TQLV), 875–895 (TITK…MIGI), and 910–930 (GLGF…IILF).

It belongs to the MscS (TC 1.A.23) family. Homoheptamer.

The protein localises to the cell inner membrane. Mechanosensitive channel that protects cells against hypoosmotic stress when highly overexpressed. Gates spontaneously in response to increased membrane tension. This chain is Miniconductance mechanosensitive channel MscM (mscM), found in Escherichia coli (strain K12).